The following is a 162-amino-acid chain: Cyclic pyranopterin monophosphate synthase (162 aa).

Residues 75–77 (LCH) and 113–114 (ME) each bind substrate. The active site involves Asp-128.

The protein belongs to the MoaC family. Homohexamer; trimer of dimers.

It catalyses the reaction (8S)-3',8-cyclo-7,8-dihydroguanosine 5'-triphosphate = cyclic pyranopterin phosphate + diphosphate. The protein operates within cofactor biosynthesis; molybdopterin biosynthesis. Its function is as follows. Catalyzes the conversion of (8S)-3',8-cyclo-7,8-dihydroguanosine 5'-triphosphate to cyclic pyranopterin monophosphate (cPMP). The protein is Cyclic pyranopterin monophosphate synthase of Klebsiella pneumoniae subsp. pneumoniae (strain ATCC 700721 / MGH 78578).